A 163-amino-acid polypeptide reads, in one-letter code: Epithelial membrane protein 3 (163 aa).

A helical transmembrane segment spans residues 4-24; it reads LLLVVSALHILILVLLFVATL. Asn46 and Asn56 each carry an N-linked (GlcNAc...) asparagine glycan. The next 3 membrane-spanning stretches (helical) occupy residues 66 to 86, 100 to 120, and 139 to 159; these read VQAL…LFMI, TGLC…IYAI, and FALA…YIHL.

Belongs to the PMP-22/EMP/MP20 family.

Its subcellular location is the membrane. In terms of biological role, probably involved in cell proliferation and cell-cell interactions. In Rattus norvegicus (Rat), this protein is Epithelial membrane protein 3 (Emp3).